Consider the following 524-residue polypeptide: Excitatory amino acid transporter 3 (524 aa).

Topologically, residues 1–18 (MGKPARKGCDWKRFLRNN) are cytoplasmic. A helical membrane pass occupies residues 19 to 38 (WLLLSTVVAVVLGIVIGVLV). The Extracellular segment spans residues 39-61 (REYSKLSNLEKFYFSFPGEILMR). A helical membrane pass occupies residues 62–82 (MLKLVILPLIVSSMITGVATL). Topologically, residues 83-93 (DSNVSGKIGLR) are cytoplasmic. A helical transmembrane segment spans residues 94–114 (AVVYYFCTTLIAVILGIVLVV). Residues tyrosine 98, threonine 101, and threonine 102 each coordinate Na(+). The Extracellular segment spans residues 115–205 (SIKPGVTQKV…KTKEYKVVGM (91 aa)). 2 N-linked (GlcNAc...) asparagine glycosylation sites follow: asparagine 178 and asparagine 195. The helical transmembrane segment at 206–229 (YSDGINVLGLIVFCLVLGIVIGRK) threads the bilayer. Topologically, residues 230 to 238 (WEKGQILVD) are cytoplasmic. The chain crosses the membrane as a helical span at residues 239-266 (FFNALSDATMKIVQIIMCYMPIGILFLI). Topologically, residues 267 to 286 (AGKIIEVEDWEIFRKLGLYM) are extracellular. A helical transmembrane segment spans residues 287–308 (ATVLSGLAIHSIVILPLIYFII). The Cytoplasmic portion of the chain corresponds to 309 to 313 (VRKNP). Positions 314–344 (FQFAMGMAQALLTALMISSSSATLPVTFRCA) form an intramembrane region, discontinuously helical. Residues serine 331 and serine 333 each contribute to the L-aspartate site. The Cytoplasmic portion of the chain corresponds to 345 to 353 (EEKNRVDKR). A helical membrane pass occupies residues 354–380 (ITRFVLPVGATINMDGTALYEAVAAVF). Residues glycine 362, threonine 364, asparagine 366, and aspartate 368 each contribute to the Na(+) site. Threonine 370 is an L-aspartate binding site. Topologically, residues 381–393 (IAQLNDLDLSVGQ) are extracellular. The segment at residues 394–427 (IITISVTATAASIGAAGVPQPGLVTMVIVLSAVG) is an intramembrane region (discontinuously helical). Serine 405, isoleucine 406, and alanine 408 together coordinate Na(+). Valine 411 lines the L-aspartate pocket. Over 428–440 (LPAEDVTLIIAVD) the chain is Extracellular. The helical transmembrane segment at 441-462 (WLLDRFRTMVNVLGDAFGTGIV) threads the bilayer. L-aspartate is bound by residues arginine 447, threonine 448, and asparagine 451. Residues asparagine 451 and aspartate 455 each coordinate Na(+). Residues 463-524 (EKLSKKELEQ…TISFTQTSQF (62 aa)) lie on the Cytoplasmic side of the membrane. Serine 517 and serine 522 each carry phosphoserine.

It belongs to the dicarboxylate/amino acid:cation symporter (DAACS) (TC 2.A.23) family. SLC1A1 subfamily. In terms of assembly, homotrimer. Interacts with ARL6IP5. Interacts with RTN2 (via N-terminus); the interaction promotes cell surface expression of SLC1A1. Interacts with SORCS2; this interaction is important for normal expression at the cell membrane.

The protein resides in the cell membrane. The protein localises to the apical cell membrane. It is found in the synapse. It localises to the synaptosome. Its subcellular location is the early endosome membrane. The protein resides in the late endosome membrane. The protein localises to the recycling endosome membrane. It catalyses the reaction K(+)(in) + L-glutamate(out) + 3 Na(+)(out) + H(+)(out) = K(+)(out) + L-glutamate(in) + 3 Na(+)(in) + H(+)(in). The catalysed reaction is K(+)(in) + L-aspartate(out) + 3 Na(+)(out) + H(+)(out) = K(+)(out) + L-aspartate(in) + 3 Na(+)(in) + H(+)(in). The enzyme catalyses D-aspartate(out) + K(+)(in) + 3 Na(+)(out) + H(+)(out) = D-aspartate(in) + K(+)(out) + 3 Na(+)(in) + H(+)(in). It carries out the reaction K(+)(in) + L-cysteine(out) + 3 Na(+)(out) + H(+)(out) = K(+)(out) + L-cysteine(in) + 3 Na(+)(in) + H(+)(in). Sodium-dependent, high-affinity amino acid transporter that mediates the uptake of L-glutamate and also L-aspartate and D-aspartate. Can also transport L-cysteine. Functions as a symporter that transports one amino acid molecule together with two or three Na(+) ions and one proton, in parallel with the counter-transport of one K(+) ion. Mediates Cl(-) flux that is not coupled to amino acid transport; this avoids the accumulation of negative charges due to aspartate and Na(+) symport. Plays an important role in L-glutamate and L-aspartate reabsorption in renal tubuli. Plays a redundant role in the rapid removal of released glutamate from the synaptic cleft, which is essential for terminating the postsynaptic action of glutamate. Contributes to glutathione biosynthesis and protection against oxidative stress via its role in L-glutamate and L-cysteine transport. Negatively regulated by ARL6IP5. The chain is Excitatory amino acid transporter 3 (SLC1A1) from Bos taurus (Bovine).